We begin with the raw amino-acid sequence, 1706 residues long: Histone acetyltransferase HAC12 (1706 aa).

Disordered regions lie at residues Met-1–Leu-33, Thr-251–Met-284, Val-397–Thr-456, and Gln-524–Ser-543. Residues Val-397 to His-406 are compositionally biased toward polar residues. Residues Gln-407–Gln-434 show a composition bias toward low complexity. The TAZ-type 1 zinc finger occupies His-637–Val-716. Residues Thr-791–Pro-909 form a disordered region. The span at Cys-794–Asp-805 shows a compositional bias: polar residues. 2 stretches are compositionally biased toward basic and acidic residues: residues Asp-809–Ile-829 and Pro-870–Leu-896. A PHD-type zinc finger spans residues His-998–Ile-1075. The 437-residue stretch at Val-1090 to Ala-1526 folds into the CBP/p300-type HAT domain. Residues Leu-1213 to Ser-1215, Arg-1232 to Thr-1233, and Trp-1288 contribute to the acetyl-CoA site. 2 consecutive ZZ-type zinc fingers follow at residues His-1408–Ile-1471 and Ala-1528–Asp-1581. Positions 1413, 1416, 1428, 1431, 1437, 1440, 1453, 1461, 1533, 1536, 1548, 1551, 1557, 1560, 1569, and 1571 each coordinate Zn(2+). The TAZ-type 2 zinc finger occupies Glu-1588–Leu-1671.

The protein resides in the nucleus. The enzyme catalyses L-lysyl-[protein] + acetyl-CoA = N(6)-acetyl-L-lysyl-[protein] + CoA + H(+). Acetyltransferase enzyme. Acetylates histones, giving a specific tag for transcriptional activation. This is Histone acetyltransferase HAC12 (HAC12) from Arabidopsis thaliana (Mouse-ear cress).